Here is a 359-residue protein sequence, read N- to C-terminus: Protein disulfide-isomerase C17H9.14c (359 aa).

The first 19 residues, 1–19 (MRLPLLSFVIFALFALVFA), serve as a signal peptide directing secretion. Thioredoxin domains follow at residues 20–130 (SGVV…EKTG) and 134–250 (RKIV…KKSG). Residues cysteine 51 and cysteine 54 each act as nucleophile in the active site. 2 cysteine pairs are disulfide-bonded: cysteine 51-cysteine 54 and cysteine 170-cysteine 173.

This sequence belongs to the protein disulfide isomerase family.

The catalysed reaction is Catalyzes the rearrangement of -S-S- bonds in proteins.. Participates in the folding of proteins containing disulfide bonds, may be involved in glycosylation, prolyl hydroxylation and triglyceride transfer. This is Protein disulfide-isomerase C17H9.14c from Schizosaccharomyces pombe (strain 972 / ATCC 24843) (Fission yeast).